The primary structure comprises 385 residues: Mitochondrial protein C2orf69 (385 aa).

A mitochondrion-targeting transit peptide spans 1–24 (MWGFRLLRSPPLLLLLPQLGIGNA).

The protein belongs to the C2orf69 family.

Its subcellular location is the mitochondrion matrix. May play a role in the respiratory chain. This is Mitochondrial protein C2orf69 (C2orf69) from Homo sapiens (Human).